Reading from the N-terminus, the 262-residue chain is Tryptophan synthase alpha chain (262 aa).

Residues Glu49 and Asp60 each act as proton acceptor in the active site.

This sequence belongs to the TrpA family. Tetramer of two alpha and two beta chains.

The catalysed reaction is (1S,2R)-1-C-(indol-3-yl)glycerol 3-phosphate + L-serine = D-glyceraldehyde 3-phosphate + L-tryptophan + H2O. Its pathway is amino-acid biosynthesis; L-tryptophan biosynthesis; L-tryptophan from chorismate: step 5/5. Functionally, the alpha subunit is responsible for the aldol cleavage of indoleglycerol phosphate to indole and glyceraldehyde 3-phosphate. The sequence is that of Tryptophan synthase alpha chain from Thermoanaerobacter pseudethanolicus (strain ATCC 33223 / 39E) (Clostridium thermohydrosulfuricum).